A 297-amino-acid polypeptide reads, in one-letter code: Haloalkane dehalogenase (297 aa).

The 102-residue stretch at 47–148 folds into the AB hydrolase-1 domain; that stretch reads PPIVLLHGEP…AIARLVVANG (102 aa). Asp123 (nucleophile) is an active-site residue. Residue Asp250 is the Proton donor of the active site. The Proton acceptor role is filled by His279.

Belongs to the haloalkane dehalogenase family. Type 1 subfamily. As to quaternary structure, monomer.

The enzyme catalyses 1-haloalkane + H2O = a halide anion + a primary alcohol + H(+). Functionally, catalyzes hydrolytic cleavage of carbon-halogen bonds in halogenated aliphatic compounds, leading to the formation of the corresponding primary alcohols, halide ions and protons. This Mycobacterium marinum (strain ATCC BAA-535 / M) protein is Haloalkane dehalogenase.